Reading from the N-terminus, the 473-residue chain is T-box transcription factor TBX6L (473 aa).

The T-box DNA-binding region spans 43-217 (LWDKFSSIGT…NNPFAKGFRD (175 aa)). A disordered region spans residues 342–361 (RLNPQETHHNSRPKIQLQPP).

Exclusively expressed by ventral mesendoderm.

It localises to the nucleus. Probable transcriptional regulator involved in developmental processes. The protein is T-box transcription factor TBX6L (tbx6l) of Danio rerio (Zebrafish).